A 342-amino-acid chain; its full sequence is Protein pelota homolog (342 aa).

Belongs to the eukaryotic release factor 1 family. Pelota subfamily. As to quaternary structure, monomer. Requires a divalent metal cation as cofactor.

The protein localises to the cytoplasm. Its function is as follows. May function in recognizing stalled ribosomes, interact with stem-loop structures in stalled mRNA molecules, and effect endonucleolytic cleavage of the mRNA. May play a role in the release non-functional ribosomes and degradation of damaged mRNAs. Has endoribonuclease activity. The polypeptide is Protein pelota homolog (Sulfolobus acidocaldarius (strain ATCC 33909 / DSM 639 / JCM 8929 / NBRC 15157 / NCIMB 11770)).